The sequence spans 184 residues: MITEGAARRVHIIQGEYKVLNDPNAVLSTILGSCVAACLRDPVAGVGGMNHFLLPGSATSPTSGGDATRYGVHLMELLINGLLKQGARRDRLEAKIFGGAKTISTFSNVGEQNAAFAVQFLRDEGIPVVGSSTGGEHGRKLEYWPVSGRARQYPLTGAETQRTVALEQRPAAPQKPVETSIEFF.

It belongs to the CheD family.

It carries out the reaction L-glutaminyl-[protein] + H2O = L-glutamyl-[protein] + NH4(+). In terms of biological role, probably deamidates glutamine residues to glutamate on methyl-accepting chemotaxis receptors (MCPs), playing an important role in chemotaxis. This Rhizobium johnstonii (strain DSM 114642 / LMG 32736 / 3841) (Rhizobium leguminosarum bv. viciae) protein is Probable chemoreceptor glutamine deamidase CheD.